The chain runs to 444 residues: Phosphoglucosamine mutase (444 aa).

Ser103 serves as the catalytic Phosphoserine intermediate. Residues Ser103, Asp242, Asp244, and Asp246 each contribute to the Mg(2+) site. Ser103 is modified (phosphoserine).

It belongs to the phosphohexose mutase family. It depends on Mg(2+) as a cofactor. In terms of processing, activated by phosphorylation.

It carries out the reaction alpha-D-glucosamine 1-phosphate = D-glucosamine 6-phosphate. In terms of biological role, catalyzes the conversion of glucosamine-6-phosphate to glucosamine-1-phosphate. The polypeptide is Phosphoglucosamine mutase (Hydrogenovibrio crunogenus (strain DSM 25203 / XCL-2) (Thiomicrospira crunogena)).